A 159-amino-acid polypeptide reads, in one-letter code: D-aminoacyl-tRNA deacylase (159 aa).

Positions 146 to 147 match the Gly-cisPro motif, important for rejection of L-amino acids motif; that stretch reads GP.

This sequence belongs to the DTD family. As to quaternary structure, homodimer.

It is found in the cytoplasm. It catalyses the reaction glycyl-tRNA(Ala) + H2O = tRNA(Ala) + glycine + H(+). The catalysed reaction is a D-aminoacyl-tRNA + H2O = a tRNA + a D-alpha-amino acid + H(+). An aminoacyl-tRNA editing enzyme that deacylates mischarged D-aminoacyl-tRNAs. Also deacylates mischarged glycyl-tRNA(Ala), protecting cells against glycine mischarging by AlaRS. Acts via tRNA-based rather than protein-based catalysis; rejects L-amino acids rather than detecting D-amino acids in the active site. By recycling D-aminoacyl-tRNA to D-amino acids and free tRNA molecules, this enzyme counteracts the toxicity associated with the formation of D-aminoacyl-tRNA entities in vivo and helps enforce protein L-homochirality. This is D-aminoacyl-tRNA deacylase from Bifidobacterium adolescentis (strain ATCC 15703 / DSM 20083 / NCTC 11814 / E194a).